The sequence spans 392 residues: MSIKTIKDFDFSGKRALVRCDFNVPLREGNITDDTRIRAALPTIEYLKSQGARVVLMSHLGRPKGERNLKYSLMPVAKRLSELLGQDVKMLPDCIGDEVATAVSNMKNGDVVLLENIRFYRQEEENCNDFAKKLSQNGDIFVNDAFGTAHRAHASTAGLAAYLPAVGGFLMEKEDEFLGKILKNPESPFVSIIGGSKVSSKIAVLESLLPKSNVMVIGGGMAYTFLKVEGHSIGKSLLENEYIDVAASFLKKAKELDVKVILPLDHIVASEFKEDSIPEYVDAIDIPDGKIGMDIGEKTLRKIEEVLVSAKTVIWNGPLGVFEFDSFSKGTAKVAEYVASCSGITVVGGGDSVAAVNKFNLSEKITHVSTGGGASLEYLEGKILPGIKVLEK.

Residues 21–23, Arg-36, 59–62, Arg-118, and Arg-151 contribute to the substrate site; these read DFN and HLGR. ATP contacts are provided by residues Lys-201, Gly-292, Glu-323, and 349–352; that span reads GGDS.

It belongs to the phosphoglycerate kinase family. Monomer.

It localises to the cytoplasm. The enzyme catalyses (2R)-3-phosphoglycerate + ATP = (2R)-3-phospho-glyceroyl phosphate + ADP. It participates in carbohydrate degradation; glycolysis; pyruvate from D-glyceraldehyde 3-phosphate: step 2/5. This chain is Phosphoglycerate kinase, found in Borrelia hermsii (strain HS1 / DAH).